We begin with the raw amino-acid sequence, 534 residues long: Peptide chain release factor 3 (534 aa).

One can recognise a tr-type G domain in the interval 9-278; sequence ARRRTFAIIS…FFVEHAPPPQ (270 aa). GTP is bound by residues 18 to 25, 86 to 90, and 140 to 143; these read SHPDAGKT, DTPGH, and NKLD.

It belongs to the TRAFAC class translation factor GTPase superfamily. Classic translation factor GTPase family. PrfC subfamily.

It localises to the cytoplasm. In terms of biological role, increases the formation of ribosomal termination complexes and stimulates activities of RF-1 and RF-2. It binds guanine nucleotides and has strong preference for UGA stop codons. It may interact directly with the ribosome. The stimulation of RF-1 and RF-2 is significantly reduced by GTP and GDP, but not by GMP. This Xanthomonas euvesicatoria pv. vesicatoria (strain 85-10) (Xanthomonas campestris pv. vesicatoria) protein is Peptide chain release factor 3.